The primary structure comprises 213 residues: Thymidylate kinase (213 aa).

ATP is bound at residue 7-14 (GMDGSGKT).

Belongs to the thymidylate kinase family.

The enzyme catalyses dTMP + ATP = dTDP + ADP. Its function is as follows. Phosphorylation of dTMP to form dTDP in both de novo and salvage pathways of dTTP synthesis. The protein is Thymidylate kinase of Mycoplasma capricolum subsp. capricolum (strain California kid / ATCC 27343 / NCTC 10154).